The sequence spans 1399 residues: DNA-directed RNA polymerase subunit beta' (1399 aa).

Residues Cys70, Cys72, Cys85, and Cys88 each coordinate Zn(2+). Residues Asp460, Asp462, and Asp464 each coordinate Mg(2+). The Zn(2+) site is built by Cys814, Cys888, Cys895, and Cys898.

It belongs to the RNA polymerase beta' chain family. As to quaternary structure, the RNAP catalytic core consists of 2 alpha, 1 beta, 1 beta' and 1 omega subunit. When a sigma factor is associated with the core the holoenzyme is formed, which can initiate transcription. Mg(2+) is required as a cofactor. It depends on Zn(2+) as a cofactor.

The enzyme catalyses RNA(n) + a ribonucleoside 5'-triphosphate = RNA(n+1) + diphosphate. Its function is as follows. DNA-dependent RNA polymerase catalyzes the transcription of DNA into RNA using the four ribonucleoside triphosphates as substrates. This Ectopseudomonas mendocina (strain ymp) (Pseudomonas mendocina) protein is DNA-directed RNA polymerase subunit beta'.